The following is a 551-amino-acid chain: Solute carrier family 22 member 13 (551 aa).

The Cytoplasmic portion of the chain corresponds to 1-20 (MAQFVQVLAEIGDFGRFQIQ). The helical transmembrane segment at 21-41 (LLILLCVLNFLSPFYFFAHVF) threads the bilayer. At 42-138 (MVLDEPHHCA…LVCDRKHLKD (97 aa)) the chain is on the extracellular side. 4 N-linked (GlcNAc...) asparagine glycosylation sites follow: Asn57, Asn61, Asn92, and Asn104. The helical transmembrane segment at 139 to 159 (TTQSVFMAGLLVGTLMFGPLC) threads the bilayer. The Cytoplasmic portion of the chain corresponds to 160-167 (DRIGRKAT). A helical membrane pass occupies residues 168–188 (ILAQLLLFTLIGLATAFVPSF). At 189–195 (ELYMALR) the chain is on the extracellular side. The chain crosses the membrane as a helical span at residues 196–216 (FAVATAVAGLSFSNVTLLTEW). Residues 217-224 (VGPSWRTQ) are Cytoplasmic-facing. Residues 225–245 (AVVLAQCNFSLGQMVLAGLAY) form a helical membrane-spanning segment. Topologically, residues 246 to 251 (GFRNWR) are extracellular. The helical transmembrane segment at 252–272 (LLQITGTAPGLLLFFYFWALP) threads the bilayer. Residues 273–332 (ESARWLLTRGRMDEAIQLIQKAASVNRRKLSPELMNQLVPEKTGPSGNALDLFRHPQLRK) lie on the Cytoplasmic side of the membrane. Residues 333 to 353 (VTLIIFCVWFVDSLGYYGLSL) form a helical membrane-spanning segment. Position 354 (Gln354) is a topological domain, extracellular. The chain crosses the membrane as a helical span at residues 355 to 375 (VGDFGLDVYLTQLIFGAVEVP). Topologically, residues 376–397 (ARCSSIFMMQRFGRKWSQLGTL) are cytoplasmic. Residues 398–418 (VLGGLMCIIIIFIPADLPVVV) traverse the membrane as a helical segment. Over 419–427 (TMLAVVGKM) the chain is Extracellular. A helical transmembrane segment spans residues 428 to 448 (ATAAAFTISYVYSAELFPTIL). Topologically, residues 449-452 (RQTG) are cytoplasmic. Residues 453-473 (MGLVGIFSRIGGILTPLVILL) form a helical membrane-spanning segment. Topologically, residues 474–478 (GEYHA) are extracellular. A helical transmembrane segment spans residues 479–499 (ALPMLIYGSLPIVAGLLCTLL). Residues 500 to 551 (PETHGQGLKDTLQDLELGPHPRSPKSVPSEKETEAKGRTSSPGVAFVSSTYF) are Cytoplasmic-facing. Residues 511 to 551 (LQDLELGPHPRSPKSVPSEKETEAKGRTSSPGVAFVSSTYF) are disordered. Residues 527–536 (PSEKETEAKG) show a composition bias toward basic and acidic residues. Residues 537–551 (RTSSPGVAFVSSTYF) are compositionally biased toward polar residues.

It belongs to the major facilitator (TC 2.A.1) superfamily. Organic cation transporter (TC 2.A.1.19) family. In terms of processing, glycosylated. As to expression, ubiquitous. Highly expressed in kidneys and to a weaker extent in brain, heart, and intestine. In kidneys, expressed in proximal convoluted tubule. In kidneys, also expressed in cortical collecting duct, whereas glomerulus and thick ascending limb exhibit no expression.

Its subcellular location is the apical cell membrane. The catalysed reaction is urate(out) + (S)-lactate(in) = urate(in) + (S)-lactate(out). It catalyses the reaction urate(out) + succinate(in) = urate(in) + succinate(out). The enzyme catalyses urate(out) + glutathione(in) = urate(in) + glutathione(out). It carries out the reaction nicotinate(in) + urate(out) = nicotinate(out) + urate(in). The catalysed reaction is orotate(out) + a carboxylate(in) = orotate(in) + a carboxylate(out). Its function is as follows. Anion antiporter that mediates the transport of urate, orotate and nicotinate in exchange for organic or inorganic anions. Translocates urate and orotate across the apical membrane of proximal tubule epithelial cells and involved in urate renal reabsorption. Possibly involved in orotate renal reabsorption and nicotinate intestinal reabsorption. Mediates urate uptake by an exchange with organic anions such as (S)-lactate, succinate, glutathione and nicotinate. Urate and orotate transports are Cl(-)-dependent. Shows similar transport characteristics as the urate/orotate renal antiporter SLC22A12/URAT1 and may act as a compensator of SLC22A12/URAT1 in certain conditions. This chain is Solute carrier family 22 member 13, found in Homo sapiens (Human).